Consider the following 319-residue polypeptide: Putative GPI-anchor transamidase (319 aa).

The N-terminal stretch at 1 to 16 is a signal peptide; that stretch reads MRHVLLIFCAIIATEA. Active-site residues include H156 and C198. A glycan (N-linked (GlcNAc...) asparagine) is linked at N257.

This sequence belongs to the peptidase C13 family.

Its pathway is glycolipid biosynthesis; glycosylphosphatidylinositol-anchor biosynthesis. Functionally, mediates GPI anchoring in the endoplasmic reticulum, by replacing a protein's C-terminal GPI attachment signal peptide with a pre-assembled GPI. During this transamidation reaction, the GPI transamidase forms a carbonyl intermediate with the substrate protein. The sequence is that of Putative GPI-anchor transamidase from Caenorhabditis elegans.